Reading from the N-terminus, the 322-residue chain is tRNA-modifying protein YgfZ (322 aa).

Trp182 is a binding site for folate.

It belongs to the tRNA-modifying YgfZ family.

The protein localises to the cytoplasm. In terms of biological role, folate-binding protein involved in regulating the level of ATP-DnaA and in the modification of some tRNAs. It is probably a key factor in regulatory networks that act via tRNA modification, such as initiation of chromosomal replication. This Vibrio campbellii (strain ATCC BAA-1116) protein is tRNA-modifying protein YgfZ.